Consider the following 766-residue polypeptide: Serine/threonine-protein kinase PLK4 (766 aa).

The 254-residue stretch at 14 to 267 (YEVQHLLGKG…LEAVLCHPFM (254 aa)) folds into the Protein kinase domain. Residues 20 to 28 (LGKGGFAIV) and lysine 43 each bind ATP. The active-site Proton acceptor is aspartate 138. One can recognise a Cryptic POLO box 1 (CPB1) domain in the interval 379-496 (EDRISVPPLN…ARFVGLVKSK (118 aa)). Residues 497-600 (TPKVTYFSTL…GRRPVTDVQP (104 aa)) enclose the Cryptic POLO box 2 (CPB2) domain. In terms of domain architecture, POLO box spans 658–737 (PIKRINVPDV…IPNIQIKLKT (80 aa)).

The protein belongs to the protein kinase superfamily. Ser/Thr protein kinase family. CDC5/Polo subfamily. In terms of assembly, homodimer. Post-translationally, ubiquitinated by the SCF(Slimb) ubiquitin ligase complex; leading to its degradation by the proteasome during interphase and regulating centriole number and ensuring the block to centriole reduplication.

Its subcellular location is the cytoplasm. The protein localises to the cytoskeleton. The protein resides in the microtubule organizing center. It localises to the centrosome. It is found in the centriole. It carries out the reaction L-seryl-[protein] + ATP = O-phospho-L-seryl-[protein] + ADP + H(+). The enzyme catalyses L-threonyl-[protein] + ATP = O-phospho-L-threonyl-[protein] + ADP + H(+). In terms of biological role, serine/threonine-protein kinase that plays a central role in centriole duplication. Able to trigger procentriole formation on the surface of the mother centriole cylinder, using mother centriole as a platform, leading to the recruitment of centriole biogenesis proteins such as sas-6. When overexpressed, it is able to induce centrosome amplification through the simultaneous generation of multiple procentrioles adjoining each parental centriole during S phase. Centrosome amplification following overexpression can initiate tumorigenesis, highlighting the importance of centrosome regulation in cancers. The polypeptide is Serine/threonine-protein kinase PLK4 (SAK) (Drosophila yakuba (Fruit fly)).